The sequence spans 177 residues: Large ribosomal subunit protein uL6 (177 aa).

A disordered region spans residues 151-177; that stretch reads KRPPEPYKGKGVKYADEHIRRKEGKKS. A compositionally biased stretch (basic and acidic residues) spans 152–177; it reads RPPEPYKGKGVKYADEHIRRKEGKKS.

It belongs to the universal ribosomal protein uL6 family. Part of the 50S ribosomal subunit.

Functionally, this protein binds to the 23S rRNA, and is important in its secondary structure. It is located near the subunit interface in the base of the L7/L12 stalk, and near the tRNA binding site of the peptidyltransferase center. This Fusobacterium nucleatum subsp. nucleatum (strain ATCC 25586 / DSM 15643 / BCRC 10681 / CIP 101130 / JCM 8532 / KCTC 2640 / LMG 13131 / VPI 4355) protein is Large ribosomal subunit protein uL6.